A 472-amino-acid polypeptide reads, in one-letter code: SURF6 homolog gldi-11 (472 aa).

Disordered stretches follow at residues 53-73, 89-232, 249-350, and 414-472; these read LSKK…AKGL, KSKQ…SPEI, KVER…DRAL, and LVKK…GRIL. The segment covering 95–106 has biased composition (low complexity); that stretch reads KVQPQKVVAPVK. A compositionally biased stretch (basic and acidic residues) spans 107–132; sequence RPADQNKNKEKVVKKDQKKQDKKADS. Over residues 133-150 the composition is skewed to acidic residues; the sequence is DSEEDDSSDDEEKEETDE. Over residues 151–160 the composition is skewed to basic and acidic residues; the sequence is PVAKKQKKEE. Acidic residues-rich tracts occupy residues 161-175 and 182-194; these read SSDD…EEPE and EAED…EEEE. Over residues 197–210 the composition is skewed to polar residues; sequence SKPNKTVAQSTLKS. Over residues 212-221 the composition is skewed to basic and acidic residues; the sequence is GKIDKEIQKL. Residues 274–285 show a composition bias toward basic residues; the sequence is LKRRESKLKLKQ. A compositionally biased stretch (basic and acidic residues) spans 286–305; it reads RRAEEKKGKEAAAQVKKETV. A compositionally biased stretch (basic residues) spans 414-426; the sequence is LVKKNKMKDRRKQ. Residues 427-443 show a composition bias toward basic and acidic residues; that stretch reads KWENRENKTEGEKQTKQ. The span at 459-472 shows a compositional bias: basic residues; sequence KRKMNKLRNKGRIL.

Belongs to the SURF6 family.

The protein resides in the nucleus. It localises to the nucleoplasm. In terms of biological role, binds to both DNA and RNA in vitro, with a stronger binding capacity for RNA. May represent a nucleolar constitutive protein involved in ribosomal biosynthesis or assembly. The protein is SURF6 homolog gldi-11 of Caenorhabditis elegans.